Here is a 384-residue protein sequence, read N- to C-terminus: 23S rRNA (uracil(747)-C(5))-methyltransferase RlmC (384 aa).

[4Fe-4S] cluster contacts are provided by Cys-3, Cys-11, Cys-14, and Cys-87. 4 residues coordinate S-adenosyl-L-methionine: Gln-212, Phe-241, Glu-262, and Asn-309. Cys-336 serves as the catalytic Nucleophile.

Belongs to the class I-like SAM-binding methyltransferase superfamily. RNA M5U methyltransferase family. RlmC subfamily.

It carries out the reaction uridine(747) in 23S rRNA + S-adenosyl-L-methionine = 5-methyluridine(747) in 23S rRNA + S-adenosyl-L-homocysteine + H(+). Its function is as follows. Catalyzes the formation of 5-methyl-uridine at position 747 (m5U747) in 23S rRNA. This is 23S rRNA (uracil(747)-C(5))-methyltransferase RlmC from Shewanella amazonensis (strain ATCC BAA-1098 / SB2B).